A 176-amino-acid polypeptide reads, in one-letter code: Ferritin, higher subunit (176 aa).

Residues 7-156 form the Ferritin-like diiron domain; sequence QNFHRDCEAA…DYITNLKRLG (150 aa). 6 residues coordinate Fe cation: Glu24, Glu58, Glu59, His62, Glu104, and Gln138.

The protein belongs to the ferritin family. In terms of assembly, oligomer of 24 subunits. The functional molecule is roughly spherical and contains a central cavity into which the polymeric mineral iron core is deposited.

The enzyme catalyses 4 Fe(2+) + O2 + 4 H(+) = 4 Fe(3+) + 2 H2O. Its function is as follows. Stores iron in a soluble, non-toxic, readily available form. Important for iron homeostasis. Has ferroxidase activity. Iron is taken up in the ferrous form and deposited as ferric hydroxides after oxidation. The polypeptide is Ferritin, higher subunit (Aquarana catesbeiana (American bullfrog)).